The chain runs to 416 residues: Phosphoglycerate kinase 2 (416 aa).

Substrate is bound by residues 28–30, Arg-44, 65–68, Arg-122, and Arg-162; these read DMN and HQSR. Residues Glu-337 and 362 to 365 each bind ATP; that span reads GGHI.

This sequence belongs to the phosphoglycerate kinase family. As to quaternary structure, monomer.

The protein resides in the cytoplasm. It carries out the reaction (2R)-3-phosphoglycerate + ATP = (2R)-3-phospho-glyceroyl phosphate + ADP. The protein operates within carbohydrate degradation; glycolysis; pyruvate from D-glyceraldehyde 3-phosphate: step 2/5. The chain is Phosphoglycerate kinase 2 from Methanosarcina acetivorans (strain ATCC 35395 / DSM 2834 / JCM 12185 / C2A).